Reading from the N-terminus, the 309-residue chain is MLEINKDRIKGIVLALKANYYIVQIDTINLIPELFKKKIGDHNFRLLCTKRSRLSYKGHSVSVGDFVLIEAIDWTAETGVISFVEPRKNLITRPPVANVTDVIIVVSLLDPSFDLNQVSRFLMKAEETGLKVTIVLTKRDLIDEKILEKYDKKLQTWGYQPIPISIVNGEGIQKLSARLKSMKLGVLCGPSGVGKSSLINYLLPKISIPIGKLSKKLKRGRHTTRHVELFSIYSDSFIADTPGFNKPEFYTEPSQVPQLFPELRSQLLIKKCKFRNCMHLNEPDCAISRDWERYSNYKNFLQEMLNYHH.

The region spanning 88-247 (KNLITRPPVA…IADTPGFNKP (160 aa)) is the CP-type G domain. GTP contacts are provided by residues 137–140 (TKRD) and 189–197 (GPSGVGKSS). Zn(2+) is bound by residues Cys272, Cys277, His279, and Cys285.

The protein belongs to the TRAFAC class YlqF/YawG GTPase family. RsgA subfamily. Monomer. Associates with 30S ribosomal subunit, binds 16S rRNA. Zn(2+) serves as cofactor.

It is found in the cytoplasm. One of several proteins that assist in the late maturation steps of the functional core of the 30S ribosomal subunit. Helps release RbfA from mature subunits. May play a role in the assembly of ribosomal proteins into the subunit. Circularly permuted GTPase that catalyzes slow GTP hydrolysis, GTPase activity is stimulated by the 30S ribosomal subunit. The polypeptide is Small ribosomal subunit biogenesis GTPase RsgA (Prochlorococcus marinus (strain SARG / CCMP1375 / SS120)).